A 225-amino-acid polypeptide reads, in one-letter code: Octanoyltransferase (225 aa).

Positions 44 to 219 (RETPDEIWLL…NFIAQLTHRI (176 aa)) constitute a BPL/LPL catalytic domain. Substrate is bound by residues 83–90 (RGGQITYH), 150–152 (SLG), and 163–165 (GIA). The Acyl-thioester intermediate role is filled by Cys181.

This sequence belongs to the LipB family.

The protein localises to the cytoplasm. It carries out the reaction octanoyl-[ACP] + L-lysyl-[protein] = N(6)-octanoyl-L-lysyl-[protein] + holo-[ACP] + H(+). The protein operates within protein modification; protein lipoylation via endogenous pathway; protein N(6)-(lipoyl)lysine from octanoyl-[acyl-carrier-protein]: step 1/2. Functionally, catalyzes the transfer of endogenously produced octanoic acid from octanoyl-acyl-carrier-protein onto the lipoyl domains of lipoate-dependent enzymes. Lipoyl-ACP can also act as a substrate although octanoyl-ACP is likely to be the physiological substrate. This chain is Octanoyltransferase, found in Nitrosomonas eutropha (strain DSM 101675 / C91 / Nm57).